Consider the following 368-residue polypeptide: Isopentenyl-diphosphate delta-isomerase (368 aa).

7-8 (RK) is a binding site for substrate. FMN-binding positions include threonine 65, 66–68 (GMT), serine 96, and asparagine 125. 96 to 98 (SQR) serves as a coordination point for substrate. Glutamine 160 contacts substrate. Glutamate 161 is a Mg(2+) binding site. Residues lysine 193, serine 218, threonine 223, 275 to 277 (GIR), and 296 to 297 (AL) each bind FMN.

This sequence belongs to the IPP isomerase type 2 family. As to quaternary structure, homooctamer. Dimer of tetramers. Requires FMN as cofactor. The cofactor is NADPH. It depends on Mg(2+) as a cofactor.

It is found in the cytoplasm. It carries out the reaction isopentenyl diphosphate = dimethylallyl diphosphate. Involved in the biosynthesis of isoprenoids. Catalyzes the 1,3-allylic rearrangement of the homoallylic substrate isopentenyl (IPP) to its allylic isomer, dimethylallyl diphosphate (DMAPP). The protein is Isopentenyl-diphosphate delta-isomerase of Saccharolobus shibatae (strain ATCC 51178 / DSM 5389 / JCM 8931 / NBRC 15437 / B12) (Sulfolobus shibatae).